The primary structure comprises 508 residues: Phenylalanine--tRNA ligase alpha subunit (508 aa).

Alanine 2 is modified (N-acetylalanine). Residues serine 193 and serine 301 each carry the phosphoserine modification. Lysine 311 carries the N6-acetyllysine modification. Residues threonine 329, 372–374 (QIE), and tyrosine 412 each bind L-phenylalanine. Glutamate 414 contacts Mg(2+). Phenylalanine 438 is a binding site for L-phenylalanine.

The protein belongs to the class-II aminoacyl-tRNA synthetase family. Phe-tRNA synthetase alpha subunit type 2 subfamily. Heterotetramer; dimer of two heterodimers formed by FARSA and FARSB. The cofactor is Mg(2+).

It localises to the cytoplasm. It catalyses the reaction tRNA(Phe) + L-phenylalanine + ATP = L-phenylalanyl-tRNA(Phe) + AMP + diphosphate + H(+). This is Phenylalanine--tRNA ligase alpha subunit (Farsa) from Rattus norvegicus (Rat).